Here is an 894-residue protein sequence, read N- to C-terminus: Kinesin-like protein KIN-UB (894 aa).

The disordered stretch occupies residues 1–53 (MAMASSRNGAVRGSMRPVSGANSSNLRSSSFKSRIPSSAPAPRRSSSASIGAA). Over residues 19 to 50 (SGANSSNLRSSSFKSRIPSSAPAPRRSSSASI) the composition is skewed to low complexity. Positions 60–402 (RVRVAVRLRP…ILFGQRAMKV (343 aa)) constitute a Kinesin motor domain. 145 to 152 (GQTGTGKT) provides a ligand contact to ATP. The D-BOX motif lies at 372 to 380 (RTSLIVTIG). Positions 423–588 (VQLDKVIAEN…RSQLVQLTFE (166 aa)) form a coiled coil. Disordered stretches follow at residues 530–550 (EEEV…GEGE) and 598–623 (RGAP…ESVN). Residues 603 to 623 (NSYSGTDSLPSRHSQARESVN) show a composition bias toward polar residues. ARM repeat units lie at residues 626-665 (KAPF…NLAA), 667-707 (EANQ…NLAM), 709-749 (EVSQ…NLCG), and 751-790 (DKLQ…NFAK).

This sequence belongs to the TRAFAC class myosin-kinesin ATPase superfamily. Kinesin family. Ungrouped subfamily. Interacts (via C-terminus) with NEK5. As to expression, expressed in the basal regions and petioles of immature leaves and in the root elongation zone.

Its subcellular location is the cytoplasm. The protein localises to the cytoskeleton. Functionally, involved in the control of epidermal-cell morphogenesis in roots and helical growth of roots by promoting microtubule depolymerization and limiting the accumulation of endoplasmic microtubules. Seems to be involved in the control of cell-file rotation (or twisting). In Arabidopsis thaliana (Mouse-ear cress), this protein is Kinesin-like protein KIN-UB.